The sequence spans 165 residues: Large ribosomal subunit protein uL10 (165 aa).

This sequence belongs to the universal ribosomal protein uL10 family. Part of the ribosomal stalk of the 50S ribosomal subunit. The N-terminus interacts with L11 and the large rRNA to form the base of the stalk. The C-terminus forms an elongated spine to which L12 dimers bind in a sequential fashion forming a multimeric L10(L12)X complex.

Functionally, forms part of the ribosomal stalk, playing a central role in the interaction of the ribosome with GTP-bound translation factors. In Citrobacter koseri (strain ATCC BAA-895 / CDC 4225-83 / SGSC4696), this protein is Large ribosomal subunit protein uL10.